Reading from the N-terminus, the 311-residue chain is MATYLDFEQKIKEIENELEAAKARGDTAAIEIFEKDLQKEASKTYKNLSDYQKLQLARHPDRPYALDYIRLILDDAYEIHGDRCFRDDPAILCYLGYIDGQKTLVIGEQKGRGTKNKLKRNFGMPHPEGYRKALRAAKMAEKFGLPILMLIDTPGAYPGIGAEERGQSEAIARNLIEFSMLDTPTISIVIGEGGSGGALAIGVADKLAMLKYSVFSVISPEGCAAILWNDPAKVEQATKALKITAEDLKELGLIDDIIDEPFMGAHRDKEGAAKALKEYYLQNIRELMQMDPKERLEKRYEKLMKMGRFKE.

In terms of domain architecture, CoA carboxyltransferase C-terminal spans 34–286 (EKDLQKEASK…KEYYLQNIRE (253 aa)).

Belongs to the AccA family. In terms of assembly, acetyl-CoA carboxylase is a heterohexamer composed of biotin carboxyl carrier protein (AccB), biotin carboxylase (AccC) and two subunits each of ACCase subunit alpha (AccA) and ACCase subunit beta (AccD).

The protein resides in the cytoplasm. It catalyses the reaction N(6)-carboxybiotinyl-L-lysyl-[protein] + acetyl-CoA = N(6)-biotinyl-L-lysyl-[protein] + malonyl-CoA. Its pathway is lipid metabolism; malonyl-CoA biosynthesis; malonyl-CoA from acetyl-CoA: step 1/1. Functionally, component of the acetyl coenzyme A carboxylase (ACC) complex. First, biotin carboxylase catalyzes the carboxylation of biotin on its carrier protein (BCCP) and then the CO(2) group is transferred by the carboxyltransferase to acetyl-CoA to form malonyl-CoA. The polypeptide is Acetyl-coenzyme A carboxylase carboxyl transferase subunit alpha (Nitratiruptor sp. (strain SB155-2)).